The sequence spans 248 residues: Transcription factor Spi-C (248 aa).

A DNA-binding region (ETS) is located at residues 111-194 (LRLFEYLHES…IRRKLTYQFS (84 aa)).

It belongs to the ETS family. In terms of assembly, binds DNA as a monomer.

It localises to the nucleus. Its function is as follows. Controls the development of red pulp macrophages required for red blood cells recycling and iron homeostasis. Transcription factor that binds to the PU-box, a purine-rich DNA sequence (5'-GAGGA[AT]-3') that can act as a lymphoid-specific enhancer. Regulates VCAM1 gene expression. The protein is Transcription factor Spi-C (SPIC) of Bos taurus (Bovine).